The primary structure comprises 185 residues: Alkyl hydroperoxide reductase AhpD (185 aa).

Cys132 serves as the catalytic Proton donor. The cysteines at positions 132 and 135 are disulfide-linked. Cys135 acts as the Cysteine sulfenic acid (-SOH) intermediate in catalysis.

Belongs to the AhpD family.

The catalysed reaction is N(6)-[(R)-dihydrolipoyl]-L-lysyl-[lipoyl-carrier protein] + a hydroperoxide = N(6)-[(R)-lipoyl]-L-lysyl-[lipoyl-carrier protein] + an alcohol + H2O. In terms of biological role, antioxidant protein with alkyl hydroperoxidase activity. Required for the reduction of the AhpC active site cysteine residues and for the regeneration of the AhpC enzyme activity. This is Alkyl hydroperoxide reductase AhpD from Anaeromyxobacter sp. (strain Fw109-5).